The primary structure comprises 1874 residues: Protein TIC 214 (1874 aa).

The next 6 membrane-spanning stretches (helical) occupy residues 18-38 (IINS…FSIG), 64-84 (FITG…HLAL), 87-107 (PHTI…WNNH), 124-144 (LSIQ…YFIL), 172-192 (VGWL…LVWI), and 221-241 (IFSI…PSPI). 2 disordered regions span residues 248–310 (ETSK…EIRV) and 1567–1624 (KTEC…NEED). Over residues 255–268 (GVESEEEGDVEIET) the composition is skewed to acidic residues. Basic and acidic residues-rich tracts occupy residues 298–310 (DSNK…EIRV) and 1584–1601 (NQKE…RSDA).

The protein belongs to the TIC214 family. Part of the Tic complex.

Its subcellular location is the plastid. It is found in the chloroplast inner membrane. Functionally, involved in protein precursor import into chloroplasts. May be part of an intermediate translocation complex acting as a protein-conducting channel at the inner envelope. The protein is Protein TIC 214 of Coffea arabica (Arabian coffee).